The sequence spans 511 residues: Ribonuclease Y (511 aa).

The helical transmembrane segment at 3-23 threads the bilayer; it reads VGILIGIIILGVVGFIQYTLI. The 86-residue stretch at 201-286 folds into the KH domain; sequence TVHVVALPND…EMVERAIKDV (86 aa). The HD domain maps to 327 to 420; the sequence is VLKHSIEVSY…VQAADAISAA (94 aa).

The protein belongs to the RNase Y family.

It localises to the cell membrane. Its function is as follows. Endoribonuclease that initiates mRNA decay. The polypeptide is Ribonuclease Y (Clostridium perfringens (strain SM101 / Type A)).